The chain runs to 408 residues: GTPase Obg (408 aa).

The region spanning 1 to 159 (MKFVDEVSIR…RDLKMEMKVL (159 aa)) is the Obg domain. Residues 127 to 148 (NTRFKSSTNRAPRQTTPGKPGE) are disordered. Over residues 129–143 (RFKSSTNRAPRQTTP) the composition is skewed to polar residues. Residues 160–333 (ADVGLLGLPN…LSHDLMRYLE (174 aa)) enclose the OBG-type G domain. Residues 166–173 (GLPNAGKS), 191–195 (FTTLV), 213–216 (DIPG), 283–286 (NKAD), and 314–316 (SAI) contribute to the GTP site. Residues S173 and T193 each contribute to the Mg(2+) site. Residues 385–401 (GDDDGWDDDFEDDEDGP) show a composition bias toward acidic residues. The interval 385 to 408 (GDDDGWDDDFEDDEDGPEIIYVRD) is disordered.

It belongs to the TRAFAC class OBG-HflX-like GTPase superfamily. OBG GTPase family. In terms of assembly, monomer. The cofactor is Mg(2+).

Its subcellular location is the cytoplasm. Its function is as follows. An essential GTPase which binds GTP, GDP and possibly (p)ppGpp with moderate affinity, with high nucleotide exchange rates and a fairly low GTP hydrolysis rate. Plays a role in control of the cell cycle, stress response, ribosome biogenesis and in those bacteria that undergo differentiation, in morphogenesis control. The chain is GTPase Obg from Pseudomonas putida (strain ATCC 700007 / DSM 6899 / JCM 31910 / BCRC 17059 / LMG 24140 / F1).